The following is a 213-amino-acid chain: Orotate phosphoribosyltransferase (213 aa).

5-phospho-alpha-D-ribose 1-diphosphate is bound at residue K26. 34 to 35 (FF) serves as a coordination point for orotate. 5-phospho-alpha-D-ribose 1-diphosphate-binding positions include 72–73 (YK), R99, K100, K103, H105, and 124–132 (DDVITAGTA). Residues T128 and R156 each contribute to the orotate site.

Belongs to the purine/pyrimidine phosphoribosyltransferase family. PyrE subfamily. As to quaternary structure, homodimer. Mg(2+) is required as a cofactor.

The catalysed reaction is orotidine 5'-phosphate + diphosphate = orotate + 5-phospho-alpha-D-ribose 1-diphosphate. It participates in pyrimidine metabolism; UMP biosynthesis via de novo pathway; UMP from orotate: step 1/2. Its function is as follows. Catalyzes the transfer of a ribosyl phosphate group from 5-phosphoribose 1-diphosphate to orotate, leading to the formation of orotidine monophosphate (OMP). This chain is Orotate phosphoribosyltransferase, found in Edwardsiella ictaluri (strain 93-146).